We begin with the raw amino-acid sequence, 149 residues long: Nucleoside diphosphate kinase 1 (149 aa).

Met1 carries the post-translational modification N-acetylmethionine. The ATP site is built by Lys9, Phe57, Arg85, Thr91, Arg102, and Asn112. His115 (pros-phosphohistidine intermediate) is an active-site residue.

Belongs to the NDK family. In terms of assembly, interacts with CAT1, CAT2 and CAT3. Mg(2+) is required as a cofactor.

The protein localises to the peroxisome. The protein resides in the nucleus. It is found in the cytoplasm. The enzyme catalyses a 2'-deoxyribonucleoside 5'-diphosphate + ATP = a 2'-deoxyribonucleoside 5'-triphosphate + ADP. It catalyses the reaction a ribonucleoside 5'-diphosphate + ATP = a ribonucleoside 5'-triphosphate + ADP. Its function is as follows. Major role in the synthesis of nucleoside triphosphates other than ATP. The ATP gamma phosphate is transferred to the NDP beta phosphate via a ping-pong mechanism, using a phosphorylated active-site intermediate. Plays a role in response to reactive oxygen species (ROS) stress. The protein is Nucleoside diphosphate kinase 1 (NDK1) of Arabidopsis thaliana (Mouse-ear cress).